A 181-amino-acid polypeptide reads, in one-letter code: MSKADKALLIVDMINNFEFDMGETLAKKTEKIVPHILSLKEHARQNEWPIIYINDHYGLWQADIKNIQQECTNERSKDIITKIAPVDADYFLIKPKHSAFYETALHTLLTELQVRHIIITGIAGNICVLFTANDAYMREYSITIPKDCIASNSDEDNEFALTMMENVLFAEITTEEQIIEK.

It belongs to the isochorismatase family.

This is an uncharacterized protein from Bacillus subtilis (strain 168).